Reading from the N-terminus, the 93-residue chain is Large ribosomal subunit protein uL23cz/uL23cy (93 aa).

It belongs to the universal ribosomal protein uL23 family. In terms of assembly, part of the 50S ribosomal subunit.

The protein localises to the plastid. It localises to the chloroplast. In terms of biological role, binds to 23S rRNA. The polypeptide is Large ribosomal subunit protein uL23cz/uL23cy (rpl23-A) (Panax ginseng (Korean ginseng)).